A 30-amino-acid polypeptide reads, in one-letter code: Kalata-B17 (30 aa).

Residues 1–30 constitute a cross-link (cyclopeptide (Gly-Asn)); it reads GIPCAESCVYIPCTITALLGCKCKDQVCYN. Cystine bridges form between cysteine 4–cysteine 21, cysteine 8–cysteine 23, and cysteine 13–cysteine 28.

This is a cyclic peptide.

Its function is as follows. Probably participates in a plant defense mechanism. The sequence is that of Kalata-B17 from Oldenlandia affinis.